The primary structure comprises 456 residues: MALCKAEVKKVADELGRPLTFNVQTFGCQMNAKDSEKLAGILETIGYVESDSEEADFVVYNTCTVRENANTRVYGRIGFLGNLKKKNPHMRIALCGCMMQESHVVEKIKKSYRFVDIVFGTHNIFKLAELIYARHTTKKMVIDIWKETDKIVEELPSEQKYKFKAGVNIMYGCNNFCSYCIVPYVRGRERSRNPEDIIKEIKQLVSKGVVEVMLLGQNVNSYGKTLDEPVSFAQLLQMVEQVEGLKRIRFMTPHPKDLSNDVIEVMKNSKKICNHIHLPVQSGSTELLMKMNRKYTKEDYLNLVDRIKMAMPNISLTTDIIVGFPGETEEDFLDTLDVVRKVGYDSAYTFIYSKRSGTPAATMENQIPEEVANERFQRLLTTIRESSSKISKDDEGKIAEVLVEEVNEQDNSLMTGRLSNNVLVHFKGTKELIGNIVSVKLSECKGFYYMGEMMED.

Residues 19–136 enclose the MTTase N-terminal domain; sequence LTFNVQTFGC…LAELIYARHT (118 aa). Positions 28, 63, 97, 173, 177, and 180 each coordinate [4Fe-4S] cluster. Residues 159-389 form the Radical SAM core domain; it reads QKYKFKAGVN…LTTIRESSSK (231 aa). A TRAM domain is found at 392-455; that stretch reads KDDEGKIAEV…GFYYMGEMME (64 aa).

The protein belongs to the methylthiotransferase family. MiaB subfamily. As to quaternary structure, monomer. The cofactor is [4Fe-4S] cluster.

It is found in the cytoplasm. It catalyses the reaction N(6)-dimethylallyladenosine(37) in tRNA + (sulfur carrier)-SH + AH2 + 2 S-adenosyl-L-methionine = 2-methylsulfanyl-N(6)-dimethylallyladenosine(37) in tRNA + (sulfur carrier)-H + 5'-deoxyadenosine + L-methionine + A + S-adenosyl-L-homocysteine + 2 H(+). Catalyzes the methylthiolation of N6-(dimethylallyl)adenosine (i(6)A), leading to the formation of 2-methylthio-N6-(dimethylallyl)adenosine (ms(2)i(6)A) at position 37 in tRNAs that read codons beginning with uridine. The polypeptide is tRNA-2-methylthio-N(6)-dimethylallyladenosine synthase (Lachnoclostridium phytofermentans (strain ATCC 700394 / DSM 18823 / ISDg) (Clostridium phytofermentans)).